We begin with the raw amino-acid sequence, 338 residues long: Ketol-acid reductoisomerase (NADP(+)) (338 aa).

The KARI N-terminal Rossmann domain occupies 1-181 (MRVFYDKDCD…GGGRTGIIET (181 aa)). Residues 24 to 27 (YGSQ), Arg-47, Ser-50, Thr-52, and 82 to 85 (DEFQ) each bind NADP(+). His-107 is a catalytic residue. Gly-133 is a binding site for NADP(+). The KARI C-terminal knotted domain occupies 182 to 327 (TFKDETETDL…EKLRAMMPWI (146 aa)). Asp-190, Glu-194, Glu-226, and Glu-230 together coordinate Mg(2+). A substrate-binding site is contributed by Ser-251.

This sequence belongs to the ketol-acid reductoisomerase family. Mg(2+) is required as a cofactor.

The enzyme catalyses (2R)-2,3-dihydroxy-3-methylbutanoate + NADP(+) = (2S)-2-acetolactate + NADPH + H(+). It carries out the reaction (2R,3R)-2,3-dihydroxy-3-methylpentanoate + NADP(+) = (S)-2-ethyl-2-hydroxy-3-oxobutanoate + NADPH + H(+). The protein operates within amino-acid biosynthesis; L-isoleucine biosynthesis; L-isoleucine from 2-oxobutanoate: step 2/4. It participates in amino-acid biosynthesis; L-valine biosynthesis; L-valine from pyruvate: step 2/4. Functionally, involved in the biosynthesis of branched-chain amino acids (BCAA). Catalyzes an alkyl-migration followed by a ketol-acid reduction of (S)-2-acetolactate (S2AL) to yield (R)-2,3-dihydroxy-isovalerate. In the isomerase reaction, S2AL is rearranged via a Mg-dependent methyl migration to produce 3-hydroxy-3-methyl-2-ketobutyrate (HMKB). In the reductase reaction, this 2-ketoacid undergoes a metal-dependent reduction by NADPH to yield (R)-2,3-dihydroxy-isovalerate. The polypeptide is Ketol-acid reductoisomerase (NADP(+)) (Pseudomonas paraeruginosa (strain DSM 24068 / PA7) (Pseudomonas aeruginosa (strain PA7))).